A 512-amino-acid polypeptide reads, in one-letter code: 2,3-bisphosphoglycerate-independent phosphoglycerate mutase (512 aa).

Residues D11 and S61 each contribute to the Mn(2+) site. The active-site Phosphoserine intermediate is S61. Substrate contacts are provided by residues H122, 152–153, R184, R190, 259–262, and K332; these read RD and RADR. Residues D399, H403, D440, H441, and H459 each coordinate Mn(2+).

It belongs to the BPG-independent phosphoglycerate mutase family. As to quaternary structure, monomer. Mn(2+) serves as cofactor.

It carries out the reaction (2R)-2-phosphoglycerate = (2R)-3-phosphoglycerate. It functions in the pathway carbohydrate degradation; glycolysis; pyruvate from D-glyceraldehyde 3-phosphate: step 3/5. Functionally, catalyzes the interconversion of 2-phosphoglycerate and 3-phosphoglycerate. The sequence is that of 2,3-bisphosphoglycerate-independent phosphoglycerate mutase from Francisella tularensis subsp. holarctica (strain FTNF002-00 / FTA).